The following is a 298-amino-acid chain: Protein ABIL1 (298 aa).

Belongs to the ABI family. In terms of assembly, binds SCAR2. In terms of tissue distribution, expressed in seedlings, roots, hypocotyls, cotyledons, leaves, stems, and flowers.

It localises to the cytoplasm. It is found in the cytoskeleton. In terms of biological role, involved in regulation of actin and microtubule organization. Part of a WAVE complex that activates the Arp2/3 complex. The polypeptide is Protein ABIL1 (ABIL1) (Arabidopsis thaliana (Mouse-ear cress)).